A 590-amino-acid polypeptide reads, in one-letter code: Urease subunit alpha (590 aa).

Positions 134–590 (GGIDSHIHFI…LPLAQRYFLF (457 aa)) constitute a Urease domain. Ni(2+) is bound by residues His-139, His-141, and Lys-222. The residue at position 222 (Lys-222) is an N6-carboxylysine. Residue His-224 coordinates substrate. Positions 251 and 277 each coordinate Ni(2+). His-325 acts as the Proton donor in catalysis. Asp-365 is a binding site for Ni(2+). A disordered region spans residues 388–416 (QQRGWLSPPAAGQGAGLSSAAGQGVDHDT). Low complexity predominate over residues 393–411 (LSPPAAGQGAGLSSAAGQG).

It belongs to the metallo-dependent hydrolases superfamily. Urease alpha subunit family. In terms of assembly, heterotrimer of UreA (gamma), UreB (beta) and UreC (alpha) subunits. Three heterotrimers associate to form the active enzyme. Ni cation serves as cofactor. Carboxylation allows a single lysine to coordinate two nickel ions.

It localises to the cytoplasm. It carries out the reaction urea + 2 H2O + H(+) = hydrogencarbonate + 2 NH4(+). It functions in the pathway nitrogen metabolism; urea degradation; CO(2) and NH(3) from urea (urease route): step 1/1. This is Urease subunit alpha from Verminephrobacter eiseniae (strain EF01-2).